A 680-amino-acid polypeptide reads, in one-letter code: Enzymatic polyprotein (680 aa).

A protease region spans residues 41–131; it reads LHCFVDTGAS…LYEPFIQFTD (91 aa). Residue D46 is part of the active site. In terms of domain architecture, Reverse transcriptase spans 273-453; it reads LKVIKPSKSP…KKINFLGLEI (181 aa).

Belongs to the caulimoviridae enzymatic polyprotein family.

The enzyme catalyses DNA(n) + a 2'-deoxyribonucleoside 5'-triphosphate = DNA(n+1) + diphosphate. In terms of biological role, encodes for at least two polypeptides: protease (PR) and reverse transcriptase (RT). The protease processes the polyprotein in cis. Reverse transcriptase is multifunctional enzyme that converts the viral RNA genome into dsDNA in viral cytoplasmic capsids. This enzyme displays a DNA polymerase activity that can copy either DNA or RNA templates, and a ribonuclease H (RNase H) activity that cleaves the RNA strand of RNA-DNA heteroduplexes in a partially processive 3'- to 5'-endonucleasic mode. Neo-synthesized pregenomic RNA (pgRNA) are encapsidated, and reverse-transcribed inside the nucleocapsid. Partial (+)DNA is synthesized from the (-)DNA template and generates the relaxed circular DNA (RC-DNA) genome. After budding and infection, the RC-DNA migrates in the nucleus, and is converted into a plasmid-like covalently closed circular DNA (cccDNA). The protein is Enzymatic polyprotein of Cauliflower mosaic virus (strain NY8153) (CaMV).